The sequence spans 553 residues: Chaperonin GroEL 1 (553 aa).

Residues 29–32, 86–90, glycine 413, 476–478, and aspartate 492 contribute to the ATP site; these read TIGP, DGTTT, and NAL. The tract at residues 521 to 542 is disordered; it reads KPEPPAAPAPGGDPMGGMGGMG. Residues 533 to 542 are compositionally biased toward gly residues; sequence DPMGGMGGMG.

This sequence belongs to the chaperonin (HSP60) family. As to quaternary structure, forms a cylinder of 14 subunits composed of two heptameric rings stacked back-to-back. Interacts with the co-chaperonin GroES.

It is found in the cytoplasm. The catalysed reaction is ATP + H2O + a folded polypeptide = ADP + phosphate + an unfolded polypeptide.. Its function is as follows. Together with its co-chaperonin GroES, plays an essential role in assisting protein folding. The GroEL-GroES system forms a nano-cage that allows encapsulation of the non-native substrate proteins and provides a physical environment optimized to promote and accelerate protein folding. The protein is Chaperonin GroEL 1 of Synechococcus sp. (strain WH7803).